We begin with the raw amino-acid sequence, 70 residues long: uncharacterized protein (70 aa).

The protein to M.pneumoniae MPN377.

This is an uncharacterized protein from Ureaplasma parvum serovar 3 (strain ATCC 700970).